Here is a 444-residue protein sequence, read N- to C-terminus: Phosphoglucosamine mutase (444 aa).

Catalysis depends on S102, which acts as the Phosphoserine intermediate. 4 residues coordinate Mg(2+): S102, D241, D243, and D245. S102 carries the phosphoserine modification.

It belongs to the phosphohexose mutase family. Mg(2+) serves as cofactor. Post-translationally, activated by phosphorylation.

The catalysed reaction is alpha-D-glucosamine 1-phosphate = D-glucosamine 6-phosphate. Catalyzes the conversion of glucosamine-6-phosphate to glucosamine-1-phosphate. This is Phosphoglucosamine mutase from Glaesserella parasuis serovar 5 (strain SH0165) (Haemophilus parasuis).